A 326-amino-acid chain; its full sequence is N-acetyl-gamma-glutamyl-phosphate reductase (326 aa).

Cys-155 is a catalytic residue.

Belongs to the NAGSA dehydrogenase family. Type 1 subfamily.

The protein resides in the cytoplasm. The catalysed reaction is N-acetyl-L-glutamate 5-semialdehyde + phosphate + NADP(+) = N-acetyl-L-glutamyl 5-phosphate + NADPH + H(+). It participates in amino-acid biosynthesis; L-arginine biosynthesis; N(2)-acetyl-L-ornithine from L-glutamate: step 3/4. In terms of biological role, catalyzes the NADPH-dependent reduction of N-acetyl-5-glutamyl phosphate to yield N-acetyl-L-glutamate 5-semialdehyde. The chain is N-acetyl-gamma-glutamyl-phosphate reductase from Shewanella baltica (strain OS155 / ATCC BAA-1091).